The following is a 226-amino-acid chain: Peroxiredoxin-like 2C (226 aa).

A disordered region spans residues 1 to 24 (MAAPVTRQVSGCAGRVPSPAGSVT).

Belongs to the peroxiredoxin-like PRXL2 family. PRXL2C subfamily.

May positively regulate ERK1/2 signaling and AKT1 activation leading to HIF1A up-regulation with an increased expression of glycolysis genes and enhanced glycolysis. This Mus musculus (Mouse) protein is Peroxiredoxin-like 2C (Prxl2c).